The following is a 4776-amino-acid chain: Pneumococcal serine-rich repeat protein (4776 aa).

The signal sequence occupies residues 1–72; sequence MTETVEDKVS…VVLGTISTSN (72 aa). Ser-73, Ser-75, Ser-76, Ser-78, Ser-80, Ser-82, Ser-94, Ser-100, Ser-108, Ser-110, Ser-118, Ser-120, and Ser-121 each carry an O-linked (GlcNAc...) serine glycan. The serine-rich repeat region 1, SRR1 stretch occupies residues 73–121; the sequence is SASSTSLSASESASTSASESASTSASTSASTSASESASTSASTSISASS. Positions 86–112 are disordered; it reads STSASESASTSASTSASTSASESASTS. The segment at 122–166 is self aggregating domain; it reads TVVGSQTAAATEATAKKVEEDRKKPASDYVASVTNVNLQSYAKRR. The segment at 122 to 394 is basic region, BR; the sequence is TVVGSQTAAA…QSKSLSVSAS (273 aa). The short motif at 164–168 is the Host furin cleavage recognition element; the sequence is KRRKR. Positions 273-341 are keratin 10-binding domain, cell-type specific binding to lung-derived cells; that stretch reads TQTMLTLGSD…GYGLTSSWTV (69 aa). A serine-rich repeat region 2, SRR2 region spans residues 395–4712; it reads QSASASASTS…ASTSASASAS (4318 aa). 27 disordered regions span residues 481 to 627, 861 to 889, 925 to 965, 1052 to 1085, 1123 to 1153, 1171 to 1199, 1311 to 1357, 1671 to 1731, 1792 to 1863, 2105 to 2133, 2169 to 2209, 2296 to 2329, 2367 to 2397, 2415 to 2443, 2571 to 2631, 2737 to 2805, 2855 to 3113, 3347 to 3375, 3411 to 3451, 3538 to 3571, 3609 to 3639, 3657 to 3685, 3797 to 3843, 4167 to 4197, 4215 to 4243, 4355 to 4401, and 4706 to 4747; these read ASTS…STSA, ASASTSASESASTSASASASTSASESAST, ASAS…SASA, SASTSASESASTSASASASTSASESASTSASASA, ASASTSASESASTSTSASASTSASESASTSA, ASASTSASASASTSASASTSASESASTSA, ASES…SAST, ASES…SESA, SASE…STSA, ESAS…STSA, ASAS…STSA, and SASA…GTES. Residues 4715–4747 show a composition bias toward polar residues; sequence VSNSANHSNSQVGNTSGSTGKSQKELPNTGTES. An LPXTG sorting signal motif is present at residues 4740 to 4744; the sequence is LPNTG. Thr-4743 carries the pentaglycyl murein peptidoglycan amidated threonine modification. Positions 4744-4776 are cleaved as a propeptide — removed by sortase; that stretch reads GTESSIGSVLLGVLAAVTGIGLVAKRRKRDEEE.

Belongs to the serine-rich repeat protein (SRRP) family. Binds to human and mouse protein keratin 10 (KRT10). In terms of processing, glycosylated. Only truncated substrates greater than 25 residues long are glycosylated by the Gtf1-Gtf2 complex in vitro; only Ser residues have been seen to be glycosylated. Based on electrophoretic mobility it is probable that most of the Ser residues in SSR1 and SSR2 are O-GlcNAcylated. Subsequent glycosylation by up to 7 sugar transferases (Gtf3 and GlyAT, GlyB, GlyD, GlyE, GlyF and GlyG) is able to generate very high sugar polymorphism. Post-translationally, can be cleaved by human furin protease; this fragment contributes to self-aggregation and possibly biofilm formation in vitro.

It localises to the secreted. Its subcellular location is the cell wall. It is found in the cell surface. Functionally, protein that allows bacteria to adhere to mammalian host cells. Required for full virulence in mouse infection models when infected intranasally. Required for adhesion to host cells in vitro and for persistence in the lower respiratory tract. Binds host keratin 10 (KRT10) on lung cells which mediates adhesion via the C-terminus of the basic region (BR, residues 273-341); glycosylation of either protein is not required for the interaction. A region in the N-terminus (residues 122-166) self aggregates, contributing to mature biofilm formation. The basic region (BR, residues 187-385) also self aggregates; the BR binds DNA which enhances self aggregation. This is Pneumococcal serine-rich repeat protein from Streptococcus pneumoniae serotype 4 (strain ATCC BAA-334 / TIGR4).